A 266-amino-acid chain; its full sequence is Tryptophan synthase alpha chain (266 aa).

Active-site proton acceptor residues include Glu-46 and Asp-57.

Belongs to the TrpA family. Tetramer of two alpha and two beta chains.

The enzyme catalyses (1S,2R)-1-C-(indol-3-yl)glycerol 3-phosphate + L-serine = D-glyceraldehyde 3-phosphate + L-tryptophan + H2O. It functions in the pathway amino-acid biosynthesis; L-tryptophan biosynthesis; L-tryptophan from chorismate: step 5/5. In terms of biological role, the alpha subunit is responsible for the aldol cleavage of indoleglycerol phosphate to indole and glyceraldehyde 3-phosphate. This chain is Tryptophan synthase alpha chain, found in Lacticaseibacillus casei (Lactobacillus casei).